The primary structure comprises 344 residues: C5a anaphylatoxin chemotactic receptor 2 (344 aa).

Residues 1–44 (MMNHTTSEYYDYEYDHEHYSDLPDVPVDCPAGTCFTSDVYLIVL) lie on the Extracellular side of the membrane. Asparagine 3 is a glycosylation site (N-linked (GlcNAc...) asparagine). The helical transmembrane segment at 45–67 (LVLYAAVFLVGVPGNTLVAWVTW) threads the bilayer. At 68–78 (KESRHRLGASW) the chain is on the cytoplasmic side. Residues 79–101 (FLHLTMADLLCCVSLPFLAVPIA) traverse the membrane as a helical segment. The Extracellular portion of the chain corresponds to 102-120 (QKGHWPYGAAGCWLLSSIT). An intrachain disulfide couples cysteine 113 to cysteine 192. A helical transmembrane segment spans residues 121 to 143 (ILSMYASVLLLTGLSGDLFLLAF). Topologically, residues 144–155 (RPSWKGADHRTF) are cytoplasmic. The chain crosses the membrane as a helical span at residues 156 to 178 (GVRVVQASSWMLGLLLTVPSAVY). Residues 179–208 (RRLLQEHYPPRLVCGIDYGGSVSAEVAITT) lie on the Extracellular side of the membrane. The helical transmembrane segment at 209–231 (VRFLFGFLGPLVFMAGCHGILQR) threads the bilayer. At 232 to 243 (QMARRHWPLGTA) the chain is on the cytoplasmic side. Residues 244-266 (VVVGFFICWTPYHVLRVIIAAAP) form a helical membrane-spanning segment. Residues 267–280 (PHSLLLARVLEAEP) are Extracellular-facing. The helical transmembrane segment at 281 to 300 (LFNGLALAHSALNPIMFLYF) threads the bilayer. At 301–344 (GRKQLCKSLQAACHWALRDPQDEESAVTKVSISTSHEMVSEMPV) the chain is on the cytoplasmic side. The residue at position 325 (serine 325) is a Phosphoserine.

The protein belongs to the G-protein coupled receptor 1 family. In terms of assembly, interacts with C3 (the anaphylatoxin peptide C3a and the adipogenic hormone ASP); the interaction occurs with higher affinity for ASP, enhancing the phosphorylation and activation of GPR77, recruitment of ARRB2 to the cell surface and endocytosis of GRP77. In terms of tissue distribution, highly expressed in liver and spleen. Lower levels in intestine, brain and kidney. Also expressed in adipose tissues with highest levels in gonadal and ingual fat depots. Lower levels in brown tissue.

It is found in the cell membrane. Functionally, receptor for the chemotactic and inflammatory C3a, C4a and C5a anaphylatoxin peptides and also for their dearginated forms ASP/C3adesArg, C4adesArg and C5adesArg respectively. Couples weakly to G(i)-mediated signaling pathways. In Mus musculus (Mouse), this protein is C5a anaphylatoxin chemotactic receptor 2 (C5ar2).